The sequence spans 807 residues: Putative transmembrane protein ORF807 (807 aa).

5 helical membrane passes run 210-230 (VLML…SDIL), 234-254 (GLST…IVYF), 270-290 (VTIQ…FVIL), 459-479 (ILIG…LVLT), and 657-677 (VALL…MPLV).

The protein localises to the host membrane. The protein is Putative transmembrane protein ORF807 of Acidianus filamentous virus 1 (isolate United States/Yellowstone) (AFV-1).